Here is a 77-residue protein sequence, read N- to C-terminus: uncharacterized protein (77 aa).

The HTH cro/C1-type domain occupies 13-67 (VLQYMVNNDYSLNQLALEIGVSPATLSRVLNGERRPGQLVIGKMLHYFNLKFEDL). Positions 24–43 (LNQLALEIGVSPATLSRVLN) form a DNA-binding region, H-T-H motif.

It localises to the cytoplasm. This is an uncharacterized protein from Bacillus subtilis (strain 168).